The sequence spans 127 residues: Small ribosomal subunit protein uS12 (127 aa).

Aspartate 89 carries the post-translational modification 3-methylthioaspartic acid. The segment at 104-127 (TQGVKDRKQARSKYGTKRAKAGKK) is disordered. The segment covering 113-127 (ARSKYGTKRAKAGKK) has biased composition (basic residues).

It belongs to the universal ribosomal protein uS12 family. As to quaternary structure, part of the 30S ribosomal subunit. Contacts proteins S8 and S17. May interact with IF1 in the 30S initiation complex.

With S4 and S5 plays an important role in translational accuracy. Its function is as follows. Interacts with and stabilizes bases of the 16S rRNA that are involved in tRNA selection in the A site and with the mRNA backbone. Located at the interface of the 30S and 50S subunits, it traverses the body of the 30S subunit contacting proteins on the other side and probably holding the rRNA structure together. The combined cluster of proteins S8, S12 and S17 appears to hold together the shoulder and platform of the 30S subunit. The protein is Small ribosomal subunit protein uS12 of Herminiimonas arsenicoxydans.